The following is a 190-amino-acid chain: Holliday junction branch migration complex subunit RuvA (190 aa).

Positions 1-64 are domain I; that stretch reads MIGKLTGTLL…EDAQLLYGFG (64 aa). Residues 65–137 form a domain II region; sequence TAQERQAFRE…LKGKLGADVG (73 aa). The segment at 137 to 141 is flexible linker; it reads GVRAH. The interval 142 to 190 is domain III; it reads AANDNQADILQALLALGYNDKEAAAALKALPADVGVSEGIKLALKSLSK.

The protein belongs to the RuvA family. Homotetramer. Forms an RuvA(8)-RuvB(12)-Holliday junction (HJ) complex. HJ DNA is sandwiched between 2 RuvA tetramers; dsDNA enters through RuvA and exits via RuvB. An RuvB hexamer assembles on each DNA strand where it exits the tetramer. Each RuvB hexamer is contacted by two RuvA subunits (via domain III) on 2 adjacent RuvB subunits; this complex drives branch migration. In the full resolvosome a probable DNA-RuvA(4)-RuvB(12)-RuvC(2) complex forms which resolves the HJ.

The protein localises to the cytoplasm. Its function is as follows. The RuvA-RuvB-RuvC complex processes Holliday junction (HJ) DNA during genetic recombination and DNA repair, while the RuvA-RuvB complex plays an important role in the rescue of blocked DNA replication forks via replication fork reversal (RFR). RuvA specifically binds to HJ cruciform DNA, conferring on it an open structure. The RuvB hexamer acts as an ATP-dependent pump, pulling dsDNA into and through the RuvAB complex. HJ branch migration allows RuvC to scan DNA until it finds its consensus sequence, where it cleaves and resolves the cruciform DNA. The protein is Holliday junction branch migration complex subunit RuvA of Acidovorax sp. (strain JS42).